Here is a 332-residue protein sequence, read N- to C-terminus: DNA-directed RNA polymerase subunit alpha (332 aa).

Residues 1–234 (MTVTANQVLR…DQLSVFGDFT (234 aa)) are alpha N-terminal domain (alpha-NTD). The alpha C-terminal domain (alpha-CTD) stretch occupies residues 248–332 (VDPVLLRPID…AGVASHGMLG (85 aa)).

The protein belongs to the RNA polymerase alpha chain family. In terms of assembly, homodimer. The RNAP catalytic core consists of 2 alpha, 1 beta, 1 beta' and 1 omega subunit. When a sigma factor is associated with the core the holoenzyme is formed, which can initiate transcription.

It catalyses the reaction RNA(n) + a ribonucleoside 5'-triphosphate = RNA(n+1) + diphosphate. Its function is as follows. DNA-dependent RNA polymerase catalyzes the transcription of DNA into RNA using the four ribonucleoside triphosphates as substrates. This Stenotrophomonas maltophilia (strain K279a) protein is DNA-directed RNA polymerase subunit alpha.